Reading from the N-terminus, the 292-residue chain is NAD kinase (292 aa).

The Proton acceptor role is filled by aspartate 64. NAD(+) contacts are provided by residues aspartate 64 to glycine 65, asparagine 138 to aspartate 139, arginine 149, arginine 166, aspartate 168, threonine 179 to serine 184, and glutamine 238.

Belongs to the NAD kinase family. A divalent metal cation is required as a cofactor.

It is found in the cytoplasm. The catalysed reaction is NAD(+) + ATP = ADP + NADP(+) + H(+). In terms of biological role, involved in the regulation of the intracellular balance of NAD and NADP, and is a key enzyme in the biosynthesis of NADP. Catalyzes specifically the phosphorylation on 2'-hydroxyl of the adenosine moiety of NAD to yield NADP. The polypeptide is NAD kinase (Oleidesulfovibrio alaskensis (strain ATCC BAA-1058 / DSM 17464 / G20) (Desulfovibrio alaskensis)).